A 306-amino-acid polypeptide reads, in one-letter code: Armadillo repeat-containing protein 10 (306 aa).

Residues 7-29 (VGWVAAGLVLGAGACYCIYRLTR) traverse the membrane as a helical segment. Ser-43 carries the phosphoserine modification. Thr-48 is modified (phosphothreonine). The ARM repeat unit spans residues 101-143 (GGIPIVGNKINSLNQSIKEKALNALNNLSVNVENQTKIKIYVP).

As to quaternary structure, interacts with the DNA-binding domain of p53/TP53.

The protein resides in the endoplasmic reticulum membrane. Its subcellular location is the mitochondrion outer membrane. Its function is as follows. May play a role in cell survival and cell growth. May suppress the transcriptional activity of p53/TP53. The protein is Armadillo repeat-containing protein 10 (Armc10) of Mus musculus (Mouse).